The following is a 100-amino-acid chain: MDQFLVQIFAVIHQIPKGKVSTYGEIAKMAGYPGYARHVGKALGNLPEGSKLPWFRVINSQGKISLKGRDLDRQKQKLEAEGIEVSEIGKIALRKYKWQP.

This sequence belongs to the MGMT family. ATL subfamily.

In terms of biological role, involved in DNA damage recognition. Binds DNA containing O(6)-methylguanine. Binds to the damaged base and flips the base out of the DNA duplex into an extrahelical conformation, which allows processing by repair proteins. The chain is DNA base-flipping protein from Vibrio parahaemolyticus serotype O3:K6 (strain AQ3810).